The sequence spans 481 residues: 1-acylglycerol-3-phosphate O-acyltransferase PNPLA3 (481 aa).

At 1–41 (MYDAERGWSLSFAGCGFLGFYHVGATRCLSEHAPHLLRDAR) the chain is on the cytoplasmic side. One can recognise a PNPLA domain in the interval 10 to 179 (LSFAGCGFLG…SDNVPFIDAK (170 aa)). A GXGXXG motif is present at residues 14–19 (GCGFLG). Residues 42-62 (MLFGASAGALHCVGVLSGIPL) form a helical; Signal-anchor for type II membrane protein membrane-spanning segment. Positions 45–49 (GASAG) match the GXSXG motif. Ser47 acts as the Nucleophile in catalysis. Over 63–481 (EQTLQVLSDL…FPSFSLEKSL (419 aa)) the chain is Lumenal. N-linked (GlcNAc...) asparagine glycosylation occurs at Asn89. Asp166 serves as the catalytic Proton acceptor. The DGA/G signature appears at 166–168 (DGG). The N-linked (GlcNAc...) asparagine glycan is linked to Asn280.

It is found in the membrane. It localises to the lipid droplet. It carries out the reaction a 1-acyl-sn-glycero-3-phosphate + an acyl-CoA = a 1,2-diacyl-sn-glycero-3-phosphate + CoA. The catalysed reaction is a triacylglycerol + H2O = a diacylglycerol + a fatty acid + H(+). The enzyme catalyses a 1-acylglycerol + a 1,3-diacylglycerol = a triacylglycerol + glycerol. It catalyses the reaction a 1-acylglycerol + a 1,2-diacylglycerol = a triacylglycerol + glycerol. It carries out the reaction 2 a 1-acylglycerol = a 1,2-diacylglycerol + glycerol. The catalysed reaction is 1-(9Z-octadecenoyl)-sn-glycero-3-phosphate + (9Z)-octadecenoyl-CoA = 1,2-di-(9Z-octadecenoyl)-sn-glycero-3-phosphate + CoA. The enzyme catalyses 1-(9Z-octadecenoyl)-sn-glycero-3-phosphate + hexadecanoyl-CoA = 1-(9Z)-octadecenoyl-2-hexadecanoyl-sn-glycero-3-phosphate + CoA. It catalyses the reaction 1-(9Z-octadecenoyl)-sn-glycero-3-phosphate + (9Z,12Z)-octadecadienoyl-CoA = 1-(9Z)-octadecenoyl-2-(9Z,12Z)-octadecadienoyl-sn-glycero-3-phosphate + CoA. It carries out the reaction 1-(9Z-octadecenoyl)-sn-glycero-3-phosphate + (5Z,8Z,11Z,14Z)-eicosatetraenoyl-CoA = 1-(9Z)-octadecenoyl-2-(5Z,8Z,11Z,14Z)-eicosatetraenoyl-sn-glycero-3-phosphate + CoA. The catalysed reaction is 2 1-(9Z-octadecenoyl)-glycerol = 1,2-di-(9Z-octadecenoyl)-glycerol + glycerol. The enzyme catalyses 1-(9Z-octadecenoyl)-glycerol + 1,2-di-(9Z-octadecenoyl)-glycerol = 1,2,3-tri-(9Z-octadecenoyl)-glycerol + glycerol. It catalyses the reaction 1-(9Z-octadecenoyl)-glycerol + 1,3-di-(9Z-octadecenoyl)-glycerol = 1,2,3-tri-(9Z-octadecenoyl)-glycerol + glycerol. It carries out the reaction 1,2,3-tri-(9Z-octadecenoyl)-glycerol + H2O = 1,3-di-(9Z-octadecenoyl)-glycerol + (9Z)-octadecenoate + H(+). The catalysed reaction is a 1,2-diacyl-sn-glycero-3-phosphocholine + H2O = a 1-acyl-sn-glycero-3-phosphocholine + a fatty acid + H(+). Its pathway is phospholipid metabolism. It functions in the pathway glycerolipid metabolism. With respect to regulation, the triglyceride lipase activity is inhibited by BEL ((E)-6-(bromomethylene)-3-(1-naphthalenyl)-2H-tetrahydropyran-2-one), a suicide substrate inhibitor. In terms of biological role, specifically catalyzes coenzyme A (CoA)-dependent acylation of 1-acyl-sn-glycerol 3-phosphate (2-lysophosphatidic acid/LPA) to generate phosphatidic acid (PA), an important metabolic intermediate and precursor for both triglycerides and glycerophospholipids. Does not esterify other lysophospholipids. Acyl donors are long chain (at least C16) fatty acyl-CoAs: arachidonoyl-CoA, linoleoyl-CoA, oleoyl-CoA and at a lesser extent palmitoyl-CoA. Additionally possesses low triacylglycerol lipase and CoA-independent acylglycerol transacylase activities and thus may play a role in acyl-chain remodeling of triglycerides. In vitro may express hydrolytic activity against glycerolipids triacylglycerol, diacylglycerol and monoacylglycerol, with a strong preference for oleic acid as the acyl moiety. However, the triacylglycerol hydrolase activity is controversial and may be very low. Possesses phospholipase A2 activity. The chain is 1-acylglycerol-3-phosphate O-acyltransferase PNPLA3 from Homo sapiens (Human).